Consider the following 434-residue polypeptide: Histidinol dehydrogenase (434 aa).

3 residues coordinate NAD(+): Tyr130, Gln188, and Asn211. 3 residues coordinate substrate: Ser237, Gln259, and His262. Zn(2+) is bound by residues Gln259 and His262. Active-site proton acceptor residues include Glu326 and His327. Substrate contacts are provided by His327, Asp360, Glu414, and His419. Asp360 is a Zn(2+) binding site. His419 is a Zn(2+) binding site.

This sequence belongs to the histidinol dehydrogenase family. Homodimer. Requires Zn(2+) as cofactor.

The enzyme catalyses L-histidinol + 2 NAD(+) + H2O = L-histidine + 2 NADH + 3 H(+). It functions in the pathway amino-acid biosynthesis; L-histidine biosynthesis; L-histidine from 5-phospho-alpha-D-ribose 1-diphosphate: step 9/9. Catalyzes the sequential NAD-dependent oxidations of L-histidinol to L-histidinaldehyde and then to L-histidine. This is Histidinol dehydrogenase from Shigella dysenteriae serotype 1 (strain Sd197).